The chain runs to 659 residues: MVNSKGEITDSDPGSNHLLLNGLPDKAGKNQDTEPENSLCSQYEEKVRPCIDLIDSLRALGVEQDLALPAIAVIGDQSSGKSSVLEALSGVALPRGSGIVTRCPLVLKLKKLLNEDEWRGKVSYQDFEMEISDPSEVEVEISKAQNVIAGEGQGISHELISLEVSSPHVPDLTLIDLPGITRVAVGNQPADIGRQTKQLIRKYILKQETINLVVVPCNVDIATTEALSMAQEVDPSGDRTIGILTKPDLVDRGTESKVVDVAQNLVCHLKKGYMIVKCRGQQDIQDQVTLTEALQKERDFFEDHPHFRVLLEEGRATVPCLADKLTSELITHICKTLPLLENQIKENHEKITEELKKYGSDVPEEEHEKMFFLIEKINAFNHDINSLIEGEEFVGEDESRLFTKIRNEFHKWSCVIEKKFQQGYKAIYKQIEKFENRYRGRELPGFVNYKTFEIIIKQQIKELEEPAVYMLHMVTDMVQAAFTDISEANFAEFFNLYRTTKSKIEDIKFELEKEAEKSIRLHFQMEQIVYCQDQVYQRALQRVREKVADEEKNKKINSMSSEEVSSVNISLSEIFEHLLAYRQEATNRISSHIPLIIQYFILQAYGQKLQKGMLQLLQDKDTYNWLLKERSDTSDKRKFLKERLSRLAQARRRLAKFPG.

M1 is modified (N-acetylmethionine). The disordered stretch occupies residues M1–C40. The 274-residue stretch at D65–P338 folds into the Dynamin-type G domain. Residues G75 to S82 are G1 motif. Residue G75–S82 coordinates GTP. A G2 motif region spans residues V100–R102. Residues D176–G179 form a G3 motif region. GTP contacts are provided by residues D176–I180 and T245–D248. A G4 motif region spans residues T245 to D248. Residues K277–G280 are G5 motif. The interval L339–E364 is bundle signaling element (BSE). Residues E364–C531 are middle domain. The tract at residues E365–E629 is stalk. Residues K552–K555 are critical for lipid-binding. One can recognise a GED domain in the interval L571–G659.

It belongs to the TRAFAC class dynamin-like GTPase superfamily. Dynamin/Fzo/YdjA family. As to quaternary structure, homooligomer. Oligomerizes into multimeric filamentous or ring-like structures by virtue of its stalk domain. Oligomerization is critical for GTPase activity, protein stability, and recognition of viral target structures. Interacts with TRPC1, TRPC3, TRPC4, TRPC5, TRPC6 and TRPC7. Interacts with HSPA5. Interacts with TUBB/TUBB5. Interacts with DDX39A and DDX39B. ISGylated.

It localises to the cytoplasm. The protein localises to the endoplasmic reticulum membrane. Its subcellular location is the perinuclear region. Interferon-induced dynamin-like GTPase with antiviral activity. The chain is Interferon-induced GTP-binding protein Mx1 (MX1) from Phoca vitulina (Harbor seal).